We begin with the raw amino-acid sequence, 89 residues long: Large ribosomal subunit protein bL27 (89 aa).

The interval 1-20 is disordered; it reads MAHKKAGGSSRNGRDSAGKR.

The protein belongs to the bacterial ribosomal protein bL27 family.

The chain is Large ribosomal subunit protein bL27 from Rhodopseudomonas palustris (strain HaA2).